A 396-amino-acid polypeptide reads, in one-letter code: MSKSKFERKKPHINVGTIGHVDHGKTTLTAALTRILSEQYGGEFRAYDQIDNAPEERERGITIATSHVEYETEERHYAHVDCPGHADYVKNMITGAAQMDGAVLVVSAADGPMPQTREHILLARQVGVPFILVYLNKADMVDDPELLELVEMEVRELLDSYQFPGDDTPIVVGSALKALEGDTSEIGIPSILKLVEQMDAYIPEPQRAVDQPFLMPIEDVFSISGRGTVVTGRVERGIVKVGEEIEIVGMRETQKTICTGVEMFRKLLDEGRAGDNVGVLLRGTKREDVERGQVLAKPKSITPHTKFYAEVYVLSKDEGGRHTPFFTGYRPQFYFRTTDVTGAIDLPDGVEMVMPGDNIQMTVSLIAPIAMEEGLRFAVREGGRTVGAGVVSKVIE.

One can recognise a tr-type G domain in the interval lysine 10 to glutamine 206. Positions glycine 19–threonine 26 are G1. Position 19–26 (glycine 19–threonine 26) interacts with GTP. Threonine 26 contacts Mg(2+). Positions glycine 60–alanine 64 are G2. Residues aspartate 81–glycine 84 form a G3 region. Residues aspartate 81–histidine 85 and asparagine 136–aspartate 139 contribute to the GTP site. Residues asparagine 136 to aspartate 139 form a G4 region. The G5 stretch occupies residues serine 174–leucine 176.

The protein belongs to the TRAFAC class translation factor GTPase superfamily. Classic translation factor GTPase family. EF-Tu/EF-1A subfamily. As to quaternary structure, monomer.

Its subcellular location is the cytoplasm. It catalyses the reaction GTP + H2O = GDP + phosphate + H(+). Its function is as follows. GTP hydrolase that promotes the GTP-dependent binding of aminoacyl-tRNA to the A-site of ribosomes during protein biosynthesis. This Nitrosococcus oceani (strain ATCC 19707 / BCRC 17464 / JCM 30415 / NCIMB 11848 / C-107) protein is Elongation factor Tu.